The primary structure comprises 856 residues: Nuclear valosin-containing protein-like (856 aa).

The interval 1–220 is interaction with RPL5; sequence MKPRPAGFVD…SLLESDMKRK (220 aa). Residues 49-52 carry the Nucleolar localization signal motif; the sequence is RRKR. Lys-70 is modified (N6-acetyllysine). The segment at 84–175 is disordered; sequence AKRARQGEED…AKDSEGGWFI (92 aa). The short motif at 85–88 is the Nuclear localization signal element; that stretch reads KRAR. Over residues 92 to 111 the composition is skewed to acidic residues; the sequence is EDNEYTESYSDDDSSMEDYP. 2 stretches are compositionally biased toward polar residues: residues 114–124 and 133–158; these read QSANHMNSSLL and DSVS…SKTG. Ser-134 carries the phosphoserine modification. Residue Thr-138 is modified to Phosphothreonine. The residue at position 156 (Lys-156) is an N6-acetyllysine. Ser-191 bears the Phosphoserine mark. The segment at 197–236 is disordered; that stretch reads PKKPITEIQDSKDSSLLESDMKRKGKLKNKGSKRKKEDLQ. Basic and acidic residues predominate over residues 205-218; the sequence is QDSKDSSLLESDMK. Lys-208 is covalently cross-linked (Glycyl lysine isopeptide (Lys-Gly) (interchain with G-Cter in SUMO2)). A phosphoserine mark is found at Ser-211 and Ser-215. Positions 218-232 match the Nuclear localization signal motif; the sequence is KRKGKLKNKGSKRKK. Residues 219–230 are compositionally biased toward basic residues; sequence RKGKLKNKGSKR. The tract at residues 267-474 is interaction with WDR74; that stretch reads VGGNDMTLKE…LTPGFVGADL (208 aa). 305–312 provides a ligand contact to ATP; it reads GPPGCGKT. Positions 496 to 523 are disordered; the sequence is QQKKNPEMEDLPSKGVQEERLGTEPTSE. 622-629 lines the ATP pocket; it reads GPPGCGKT.

This sequence belongs to the AAA ATPase family. Interacts with NCL/nucleolin. Isoform 1 and isoform 2 interact with TERT and isoform 1 exhibits a higher binding affinity for TERT compared to isoform 2. Isoform 1 interacts with MTREX in an ATP-dependent manner; the interaction is required to associate NVL with nuclear RNA exosome. Isoform 1 interacts with RPL5 in an ATP-dependent manner. Interacts with WDR74 (through WDR repeats); the interaction is independent of RNA or pre-60S ribosome particles. As to expression, widely expressed. Highest level of expression in heart, placenta, skeletal muscle, pancreas and retina.

Its subcellular location is the nucleus. It localises to the nucleoplasm. The protein resides in the nucleolus. In terms of biological role, participates in the assembly of the telomerase holoenzyme and effecting of telomerase activity via its interaction with TERT. Involved in both early and late stages of the pre-rRNA processing pathways. Spatiotemporally regulates 60S ribosomal subunit biogenesis in the nucleolus. Catalyzes the release of specific assembly factors, such as WDR74, from pre-60S ribosomal particles through the ATPase activity. This chain is Nuclear valosin-containing protein-like, found in Homo sapiens (Human).